Here is a 287-residue protein sequence, read N- to C-terminus: Small ribosomal subunit biogenesis GTPase RsgA (287 aa).

Residues 61–218 enclose the CP-type G domain; sequence SSELIRPTVA…LVDTPGFTTL (158 aa). GTP is bound by residues 110–113 and 161–169; these read NKED and GPSGAGKST. Zn(2+) contacts are provided by Cys242, Cys247, His249, and Cys255.

This sequence belongs to the TRAFAC class YlqF/YawG GTPase family. RsgA subfamily. In terms of assembly, monomer. Associates with 30S ribosomal subunit, binds 16S rRNA. Requires Zn(2+) as cofactor.

The protein resides in the cytoplasm. In terms of biological role, one of several proteins that assist in the late maturation steps of the functional core of the 30S ribosomal subunit. Helps release RbfA from mature subunits. May play a role in the assembly of ribosomal proteins into the subunit. Circularly permuted GTPase that catalyzes slow GTP hydrolysis, GTPase activity is stimulated by the 30S ribosomal subunit. This is Small ribosomal subunit biogenesis GTPase RsgA from Clostridium perfringens (strain ATCC 13124 / DSM 756 / JCM 1290 / NCIMB 6125 / NCTC 8237 / Type A).